The following is a 170-amino-acid chain: Transcriptional repressor NrdR (170 aa).

A zinc finger spans residues 3–34 (CPFCGTQDTKVVDSRLVSEGAQVRRRRTCIHC). In terms of domain architecture, ATP-cone spans 49-139 (PKLIKSDGSR…VYRSFKDISE (91 aa)). The segment at 151 to 170 (SVSIPKSKKTAPESKKEDQA) is disordered. Basic and acidic residues predominate over residues 160–170 (TAPESKKEDQA).

It belongs to the NrdR family. The cofactor is Zn(2+).

Functionally, negatively regulates transcription of bacterial ribonucleotide reductase nrd genes and operons by binding to NrdR-boxes. The sequence is that of Transcriptional repressor NrdR from Marinomonas sp. (strain MWYL1).